The sequence spans 693 residues: Polyribonucleotide nucleotidyltransferase (693 aa).

Residues Asp485 and Asp491 each contribute to the Mg(2+) site. Residues 552–611 (PRIMVLEINPSKIGDLIGPSGKNIKKIIEETHTTINIKPEGLVYISAPDQESAEKAAQMV) form the KH domain. An S1 motif domain is found at 621–691 (GDIFLGKVIR…SSGRISLTRK (71 aa)).

This sequence belongs to the polyribonucleotide nucleotidyltransferase family. Mg(2+) serves as cofactor.

The protein localises to the cytoplasm. It carries out the reaction RNA(n+1) + phosphate = RNA(n) + a ribonucleoside 5'-diphosphate. Functionally, involved in mRNA degradation. Catalyzes the phosphorolysis of single-stranded polyribonucleotides processively in the 3'- to 5'-direction. The polypeptide is Polyribonucleotide nucleotidyltransferase (Dictyoglomus thermophilum (strain ATCC 35947 / DSM 3960 / H-6-12)).